A 159-amino-acid polypeptide reads, in one-letter code: Ribosomal RNA large subunit methyltransferase H (159 aa).

S-adenosyl-L-methionine contacts are provided by residues leucine 76, glycine 108, and 127-132 (FSKMTF).

It belongs to the RNA methyltransferase RlmH family. In terms of assembly, homodimer.

Its subcellular location is the cytoplasm. The catalysed reaction is pseudouridine(1915) in 23S rRNA + S-adenosyl-L-methionine = N(3)-methylpseudouridine(1915) in 23S rRNA + S-adenosyl-L-homocysteine + H(+). Its function is as follows. Specifically methylates the pseudouridine at position 1915 (m3Psi1915) in 23S rRNA. The protein is Ribosomal RNA large subunit methyltransferase H of Clostridium novyi (strain NT).